Reading from the N-terminus, the 347-residue chain is Beta carbonic anhydrase 1, chloroplastic (347 aa).

The N-terminal 113 residues, 1–113, are a transit peptide targeting the chloroplast; sequence MSTAPLSGFF…AAAKVEQITA (113 aa). At alanine 114 the chain carries N-acetylalanine. At serine 175 the chain carries Phosphoserine. Tyrosine 203 is subject to Phosphotyrosine. Phosphoserine is present on serine 266. Position 280 is an S-nitrosocysteine (cysteine 280).

The protein belongs to the beta-class carbonic anhydrase family. In terms of assembly, homohexamer. In terms of processing, S-nitrosylation at Cys-280 is up-regulated during nitrosative burst and suppresses both binding of salicylic acid and carbonic anhydrase activity. S-nitrosylated in response to an avirulent but not to a virulent bacterial strain. As to expression, strongly expressed in aerial tissues including leaves, stems, flowers and siliques. Accumulates in both guard cells and mesophyll cells.

Its subcellular location is the plastid. The protein localises to the chloroplast stroma. The protein resides in the cell membrane. It catalyses the reaction hydrogencarbonate + H(+) = CO2 + H2O. Functionally, reversible hydration of carbon dioxide. Required for photosynthesis in cotyledons. Binds salicylic acid. Together with BCA4, involved in the CO(2) signaling pathway which controls gas-exchange between plants and the atmosphere by modulating stomatal development and movements. Promotes water use efficiency. This is Beta carbonic anhydrase 1, chloroplastic from Arabidopsis thaliana (Mouse-ear cress).